Consider the following 173-residue polypeptide: Crossover junction endodeoxyribonuclease RuvC (173 aa).

Catalysis depends on residues Asp8, Glu67, and Asp139. Residues Asp8, Glu67, and Asp139 each coordinate Mg(2+).

The protein belongs to the RuvC family. In terms of assembly, homodimer which binds Holliday junction (HJ) DNA. The HJ becomes 2-fold symmetrical on binding to RuvC with unstacked arms; it has a different conformation from HJ DNA in complex with RuvA. In the full resolvosome a probable DNA-RuvA(4)-RuvB(12)-RuvC(2) complex forms which resolves the HJ. Requires Mg(2+) as cofactor.

It localises to the cytoplasm. The enzyme catalyses Endonucleolytic cleavage at a junction such as a reciprocal single-stranded crossover between two homologous DNA duplexes (Holliday junction).. The RuvA-RuvB-RuvC complex processes Holliday junction (HJ) DNA during genetic recombination and DNA repair. Endonuclease that resolves HJ intermediates. Cleaves cruciform DNA by making single-stranded nicks across the HJ at symmetrical positions within the homologous arms, yielding a 5'-phosphate and a 3'-hydroxyl group; requires a central core of homology in the junction. The consensus cleavage sequence is 5'-(A/T)TT(C/G)-3'. Cleavage occurs on the 3'-side of the TT dinucleotide at the point of strand exchange. HJ branch migration catalyzed by RuvA-RuvB allows RuvC to scan DNA until it finds its consensus sequence, where it cleaves and resolves the cruciform DNA. In Tolumonas auensis (strain DSM 9187 / NBRC 110442 / TA 4), this protein is Crossover junction endodeoxyribonuclease RuvC.